Here is a 249-residue protein sequence, read N- to C-terminus: Caffeoyl-CoA O-methyltransferase 1 (249 aa).

Lysine 23 lines the substrate pocket. Residues threonine 65, glutamate 87, 89–90 (GV), serine 95, aspartate 113, and alanine 142 contribute to the S-adenosyl-L-methionine site. Aspartate 165 is a binding site for substrate. Aspartate 165 is a binding site for a divalent metal cation. Aspartate 167 is a binding site for S-adenosyl-L-methionine. A divalent metal cation-binding residues include aspartate 191 and asparagine 192. Position 196 (asparagine 196) interacts with substrate.

This sequence belongs to the class I-like SAM-binding methyltransferase superfamily. Cation-dependent O-methyltransferase family. CCoAMT subfamily. It depends on a divalent metal cation as a cofactor. In terms of tissue distribution, mostly expressed in petal limbs and tubes, and, at low levels, in flower buds, stamens, pistils, stems, roots and leaves.

It is found in the cytoplasm. The protein resides in the cytosol. It carries out the reaction (E)-caffeoyl-CoA + S-adenosyl-L-methionine = (E)-feruloyl-CoA + S-adenosyl-L-homocysteine + H(+). It catalyses the reaction (E)-5-hydroxyferuloyl-CoA + S-adenosyl-L-methionine = (E)-sinapoyl-CoA + S-adenosyl-L-homocysteine + H(+). The protein operates within aromatic compound metabolism; phenylpropanoid biosynthesis. Its function is as follows. Involved in the production of floral volatile phenylpropanoids in flowers of fragrant cultivars (e.g. cv. Mitchell and cv. V26) from cinnamic acid, a common precursor with the anthocyanin biosynthesis pathway involved in flower pigmentation. Methylates caffeoyl-CoA to feruloyl-CoA, also able to methylate 5-hydroxyferuloyl-CoA. The protein is Caffeoyl-CoA O-methyltransferase 1 of Petunia hybrida (Petunia).